The sequence spans 310 residues: Quinolinate synthase (310 aa).

The iminosuccinate site is built by histidine 27 and serine 44. Cysteine 89 lines the [4Fe-4S] cluster pocket. Residues 115 to 117 (YVN) and serine 132 contribute to the iminosuccinate site. Residue cysteine 175 participates in [4Fe-4S] cluster binding. Iminosuccinate-binding positions include 201 to 203 (HPE) and threonine 222. Cysteine 267 lines the [4Fe-4S] cluster pocket.

The protein belongs to the quinolinate synthase family. Type 2 subfamily. The cofactor is [4Fe-4S] cluster.

Its subcellular location is the cytoplasm. It carries out the reaction iminosuccinate + dihydroxyacetone phosphate = quinolinate + phosphate + 2 H2O + H(+). It participates in cofactor biosynthesis; NAD(+) biosynthesis; quinolinate from iminoaspartate: step 1/1. Catalyzes the condensation of iminoaspartate with dihydroxyacetone phosphate to form quinolinate. The polypeptide is Quinolinate synthase (Thermus thermophilus (strain ATCC 27634 / DSM 579 / HB8)).